A 159-amino-acid polypeptide reads, in one-letter code: Aspartate carbamoyltransferase regulatory chain (159 aa).

4 residues coordinate Zn(2+): cysteine 113, cysteine 118, cysteine 143, and cysteine 146.

This sequence belongs to the PyrI family. As to quaternary structure, contains catalytic and regulatory chains. The cofactor is Zn(2+).

Involved in allosteric regulation of aspartate carbamoyltransferase. The chain is Aspartate carbamoyltransferase regulatory chain from Methanococcoides burtonii (strain DSM 6242 / NBRC 107633 / OCM 468 / ACE-M).